The chain runs to 273 residues: Large ribosomal subunit protein uL2 (273 aa).

Residues 221–263 are disordered; the sequence is RGTAMNPVDHPHGGGEGRNFGKHPVSPWGLKTKGKKTRRNKRT. Positions 252 to 263 are enriched in basic residues; sequence TKGKKTRRNKRT.

Belongs to the universal ribosomal protein uL2 family. As to quaternary structure, part of the 50S ribosomal subunit. Forms a bridge to the 30S subunit in the 70S ribosome.

Its function is as follows. One of the primary rRNA binding proteins. Required for association of the 30S and 50S subunits to form the 70S ribosome, for tRNA binding and peptide bond formation. It has been suggested to have peptidyltransferase activity; this is somewhat controversial. Makes several contacts with the 16S rRNA in the 70S ribosome. This Buchnera aphidicola subsp. Cinara cedri (strain Cc) protein is Large ribosomal subunit protein uL2.